Reading from the N-terminus, the 429-residue chain is UDP-N-acetylglucosamine 1-carboxyvinyltransferase 2 (429 aa).

Phosphoenolpyruvate is bound at residue K22–N23. R92 lines the UDP-N-acetyl-alpha-D-glucosamine pocket. C116 (proton donor) is an active-site residue. C116 is modified (2-(S-cysteinyl)pyruvic acid O-phosphothioketal). UDP-N-acetyl-alpha-D-glucosamine-binding positions include R121–Q125, D305, and I327.

This sequence belongs to the EPSP synthase family. MurA subfamily.

The protein localises to the cytoplasm. It carries out the reaction phosphoenolpyruvate + UDP-N-acetyl-alpha-D-glucosamine = UDP-N-acetyl-3-O-(1-carboxyvinyl)-alpha-D-glucosamine + phosphate. It participates in cell wall biogenesis; peptidoglycan biosynthesis. Cell wall formation. Adds enolpyruvyl to UDP-N-acetylglucosamine. The polypeptide is UDP-N-acetylglucosamine 1-carboxyvinyltransferase 2 (Bacillus subtilis (strain 168)).